A 152-amino-acid polypeptide reads, in one-letter code: Regulatory protein RecX (152 aa).

This sequence belongs to the RecX family.

It localises to the cytoplasm. Functionally, modulates RecA activity. The protein is Regulatory protein RecX of Chromobacterium violaceum (strain ATCC 12472 / DSM 30191 / JCM 1249 / CCUG 213 / NBRC 12614 / NCIMB 9131 / NCTC 9757 / MK).